We begin with the raw amino-acid sequence, 120 residues long: Anti-adapter protein IraM (120 aa).

It belongs to the IraM/RssC family.

The protein resides in the cytoplasm. Its function is as follows. Involved in the stabilization of the sigma stress factor RpoS. The polypeptide is Anti-adapter protein IraM (Salmonella choleraesuis (strain SC-B67)).